The chain runs to 936 residues: MFKKLLGDPNARKLKKFQPWVTDINILEEDIQKLSDEELKAKTGEFRQALEKAKTKDEEKAILEEILPEAFAVVREAGKRVLSMRHFDVQLLGGIILHQGQIAEMKTGEGKTLVATLPAYLNGLTGKGVHVITVNDYLARRDAEWMGQVHRFLGLSVGLIQQGMNPEERKKNYTCDITYATNSEVGFDYLRDNMATNMEEVVQRPFNFCIIDEVDSVLVDEARTPLIISGQVERPSEKYIKAAEIAAALSKEKEHYEVDEKARNVLLSDEGFAEAEQLLAVQDLYNPEDPWAHFVFNALKAKELFIKDVNYIVRDDEVVIVDEFTGRVMPGRRWSDGLHQAIEAKERVDIQPETQTLATITYQNFFLLYPKLSGMTGTAKTEEAEFEKIYNLQVTIIPTNKPTGRKDLSDVVYKTEVGKWKSIAQECAEMHKEGRPVLVGTTSVEKSELLSRLLGEGKIPHQLLNAKPENVERESEIVAQAGRGGAVTIATNMAGRGTDIILGGNAEYMAKLKLREYLMPKVVKPEDDDGLGMVRVSGLKKSHVAKGFDPQQKVKTWKVSPQIFPVKLSQETEGMLKLAVNLAVKEWGERALPELVVEDKVAIAAEKAPTTEPVIEKLREVYNLIRQEYENYIEREHNQVVGCGGLHVIGTERHESRRIDNQLRGRAGRQGDPGSTRFFLSLEDNLLRIFGGDRVAGMMQAFGVEEDMPIESGLLTRSLEGAQKKVETYYYDMRKQVFEYDEVMNNQRRAIYAERRRVLEGRDLKEQVIKYAEQTMDDIVEAYINPELPSEEWELDKLVEKVKQFVYLLADLTPEQLFDLSMEDIRTFMHEQVRNAYDIKEAQVNQIRGGLMRDAERFFILQQIDTLWREHLQQMDALRESVGLRGYGQKDPLIEYKSEGYELFLDMMTDIRRNVVYSLFQFQPQPAVQTTAAETV.

ATP contacts are provided by residues Gln-90, 108–112 (GEGKT), and Asp-499.

This sequence belongs to the SecA family. Monomer and homodimer. Part of the essential Sec protein translocation apparatus which comprises SecA, SecYEG and auxiliary proteins SecDF. Other proteins may also be involved.

The protein resides in the cell inner membrane. Its subcellular location is the cellular thylakoid membrane. It is found in the cytoplasm. It carries out the reaction ATP + H2O + cellular proteinSide 1 = ADP + phosphate + cellular proteinSide 2.. Functionally, part of the Sec protein translocase complex. Interacts with the SecYEG preprotein conducting channel. Has a central role in coupling the hydrolysis of ATP to the transfer of proteins into and across the cell membrane, serving as an ATP-driven molecular motor driving the stepwise translocation of polypeptide chains across the membrane. Probably participates in protein translocation into and across both the cytoplasmic and thylakoid membranes in cyanobacterial cells. This Trichodesmium erythraeum (strain IMS101) protein is Protein translocase subunit SecA.